The primary structure comprises 590 residues: Major surface protein MspTL (590 aa).

An N-terminal signal peptide occupies residues Met1–Ala19.

It localises to the cell outer membrane. Functionally, major component of the outer membrane. The protein is Major surface protein MspTL (mspTL) of Treponema lecithinolyticum.